The chain runs to 141 residues: uncharacterized protein (141 aa).

Residues 8 to 112 (IGQVFKTKSL…VLDKQPKRNE (105 aa)) enclose the MaoC-like domain.

This is an uncharacterized protein from Bacillus subtilis (strain 168).